A 482-amino-acid chain; its full sequence is MAQTQGTKRKVCYYYDGDVGNYYYGQGHPMKPHRIRMTHNLLLNYGLYRKMEIYRPHKANAEEMTKYHSDDYIKFLRSIRPDNMSEYSKQMQRFNVGEDCPVFDGLFEFCQLSTGGSVASAVKLNKQQTDIAVNWAGGLHHAKKSEASGFCYVNDIVLAILELLKYHQRVLYIDIDIHHGDGVEEAFYTTDRVMTVSFHKYGEYFPGTGDLRDIGAGKGKYYAVNYPLRDGIDDESYEAIFKPVMSKVMEMFQPSAVVLQCGSDSLSGDRLGCFNLTIKGHAKCVEFVKSFNLPMLMLGGGGYTIRNVARCWTYETAVALDTEIPNELPYNDYFEYFGPDFKLHISPSNMTNQNTNEYLEKIKQRLFENLRMLPHAPGVQMQAIPEDAIPEESGDEDEEDPDKRISICSSDKRIACEEEFSDSDEEGEGGRKNSSNFKKAKRVKTEDEKEKDPEEKKEVTEEEKTKEEKQEAKGVKEEVKLA.

The interval 9-321 is histone deacetylase; that stretch reads RKVCYYYDGD…WTYETAVALD (313 aa). G27 and K31 together coordinate 1D-myo-inositol 1,4,5,6-tetrakisphosphate. At K74 the chain carries N6-acetyllysine; alternate. Residue K74 forms a Glycyl lysine isopeptide (Lys-Gly) (interchain with G-Cter in SUMO2); alternate linkage. The active site involves H141. Residues D176 and H178 each contribute to the Zn(2+) site. K220 is modified (N6-acetyllysine). C261 is subject to S-nitrosocysteine. Residue D264 participates in Zn(2+) binding. R270 serves as a coordination point for 1D-myo-inositol 1,4,5,6-tetrakisphosphate. C273 is modified (S-nitrosocysteine). Over residues 390-400 the composition is skewed to acidic residues; sequence PEESGDEDEED. The interval 390-482 is disordered; that stretch reads PEESGDEDEE…KGVKEEVKLA (93 aa). S393, S406, S409, S421, and S423 each carry phosphoserine. Residues 401-416 are compositionally biased toward basic and acidic residues; sequence PDKRISICSSDKRIAC. The span at 417–427 shows a compositional bias: acidic residues; that stretch reads EEEFSDSDEEG. An N6-methylated lysine; by EHMT2 modification is found at K432. A Glycyl lysine isopeptide (Lys-Gly) (interchain with G-Cter in SUMO2) cross-link involves residue K438. The span at 443 to 482 shows a compositional bias: basic and acidic residues; sequence VKTEDEKEKDPEEKKEVTEEEKTKEEKQEAKGVKEEVKLA. K444 participates in a covalent cross-link: Glycyl lysine isopeptide (Lys-Gly) (interchain with G-Cter in SUMO2); alternate. K444 participates in a covalent cross-link: Glycyl lysine isopeptide (Lys-Gly) (interchain with G-Cter in SUMO); alternate. Residues K456, K457, and K473 each participate in a glycyl lysine isopeptide (Lys-Gly) (interchain with G-Cter in SUMO2) cross-link. A Glycyl lysine isopeptide (Lys-Gly) (interchain with G-Cter in SUMO2); alternate cross-link involves residue K476. K476 is covalently cross-linked (Glycyl lysine isopeptide (Lys-Gly) (interchain with G-Cter in SUMO); alternate). K480 is covalently cross-linked (Glycyl lysine isopeptide (Lys-Gly) (interchain with G-Cter in SUMO2)).

This sequence belongs to the histone deacetylase family. HD type 1 subfamily. As to quaternary structure, part of the core histone deacetylase (HDAC) complex composed of HDAC1, HDAC2, RBBP4 and RBBP7, the core complex associates with SIN3, SAP18 and SAP30 to form the SIN3 HDAC complex. Component of the nucleosome remodeling and deacetylase (NuRD) repressor complex, composed of core proteins MTA1, MTA2, MTA3, RBBP4, RBBP7, HDAC1, HDAC2, MBD2, MBD3, and peripherally associated proteins CDK2AP1, CDK2AP2, GATAD2A, GATAD2B, CHD3, CHD4 and CHD5. The exact stoichiometry of the NuRD complex is unknown, and some subunits such as MBD2 and MBD3, GATAD2A and GATAD2B, and CHD3, CHD4 and CHD5 define mutually exclusive NuRD complexes. Component of a BHC histone deacetylase complex that contains HDAC1, HDAC2, HMG20B/BRAF35, KDM1A, RCOR1/CoREST and PHF21A/BHC80. The BHC complex may also contain ZMYM2, ZNF217, ZMYM3, GSE1 and GTF2I. Component of a mSin3A corepressor complex that contains SIN3A, SAP130, SUDS3/SAP45, ARID4B/SAP180, HDAC1 and HDAC2. Found in a trimeric complex with APBB1 and TSHZ3; the interaction between HDAC1 and APBB1 is mediated by TSHZ3. Forms a complex comprising APPL1, RUVBL2, APPL2, CTNNB1 and HDAC2. Component of a RCOR/GFI/KDM1A/HDAC complex. Part of a complex composed of TRIM28, HDAC1, HDAC2 and EHMT2. Part of a complex containing at least CDYL, MIER1, MIER2, HDAC1 and HDAC2. The large PER complex involved in the histone deacetylation is composed of at least HDAC1, PER2, SFPQ and SIN3A. Associates with the 9-1-1 complex; interacts with HUS1. Found in a complex with DNMT3A and HDAC7. Found in a complex with YY1, SIN3A and GON4L. Identified in a histone deacetylase complex that contains DNTTIP1, HDAC1 and MIDEAS; this complex assembles into a tetramer that contains four copies of each protein chain. Found in a complex composed of at least SINHCAF, SIN3A, HDAC1, SAP30, RBBP4, OGT and TET1. Component of the SIN3B complex, which includes SIN3B, HDAC1, PHF12 and MORF4L1. Interacts with GFI1; the interaction is direct. Interacts directly with GFI1B. Interacts with TSHZ3 (via N-terminus); the interaction is direct. Interacts with APEX1; the interaction is not dependent on the acetylated status of APEX1. Interacts with BANP. Interacts with BAZ2A/TIP5. Interacts with BCL6. Interacts with BCOR. Interacts with BHLHE40/DEC1. Interacts with BRCC3; this interaction is enhanced in the presence of PWWP2B. Interacts with BRMS1. Interacts with BRMS1L. Interacts with C10orf90/FATS (via its N-terminal); the interaction prevents binding of HDAC1 to CDKN1A/p21 and facilitates the acetylation and stabilization of CDKN1A/p21. Interacts with CBFA2T3. Interacts with CCAR2. Interacts with CDK2AP1. Interacts with CHD3. Interacts with CHD4. Interacts with CHFR. Interacts with CIART. Interacts with CDKN1A/p21. Interacts with CDK5 complexed to CDK5R1 (p25). Interacts with CRY1. Interacts with DAXX. Interacts with DDIT3/CHOP. Interacts with DDX5. Interacts with DHX36; this interaction occurs in a RNA-dependent manner. Interacts with DNMT1. Interacts with DNTTIP1. Interacts with E4F1. Interacts with EP300. Interacts with ERCC6. Interacts with GATAD2A. Interacts with HCFC1. Interacts with HDAC9. Interacts with HUS1. Interacts with INSM1. Interacts with KDM4A. Interacts with KDM5A; this interaction impairs histone deacetylation. Interacts with KDM5B. Interacts with KLF1. Interacts with MBD3L2. Interacts with MIER1. Interacts with NFE4. Interacts with NR4A2/NURR1. Interacts with NR1D2 (via C-terminus). Interacts with NRIP1. Interacts with NSD2. Interacts with PACS2. Interacts with PHB2. Interacts with PPHLN1. Interacts with PRDM6. Interacts with PRDM16. Interacts with PWWP2A in a MTA1-dependent manner. Interacts with PWWP2B. Interacts with RB1. Interacts with RERE. Interacts with SANBR (via the BTB domain). Interacts with SAMSN1. Interacts with SAP30L. Interacts with SETDB1. Interacts with SIN3A. Interacts with SMAD3. Interacts with SMAD4; positively regulated by ZBTB7A. Interacts with SMARCAD1. Interacts with SMARCA4/BRG1. Interacts with SMYD2. Interacts with SMYD4 (via MYND-type zinc finger). Interacts with SP1; the interaction deacetylates SP1 and regulates its transcriptional activity. Interacts with SP3; the interaction deacetylates SP3 and regulates its transcriptional activity. In vitro, C(18) ceramides increase this interaction and the subsequent SP3 deacetylation and SP3-mediated repression of the TERT promoter. Interacts with SPEN/MINT. Interacts with SPHK2. Interacts with SUV39H1. Interacts with TGIF. Interacts with TGIF2. Interacts with TRAF6. Interacts with TRIM28; the interaction recruits HDAC1 to E2F1 and inhibits its acetylation. Interacts with TSC22D3 isoform 1; this interaction affects HDAC1 activity on MYOG promoter and thus inhibits MYOD1 transcriptional activity. Interacts with UHRF1. Interacts with UHRF2. Interacts with ZBTB7A. Interacts with ZMYND8. Interacts with ZMYND15. Interacts with ZNF431. Interacts with ZNF516; this interaction is enhanced in the presence of PWWP2B. Interacts with ZNF541. Interacts with ZNF638. Interacts with ZNHIT1. Interacts with the non-histone region of MACROH2A1. Identified in a complex with HDAC2, KCTD19, DNTTIP1 and ZNF541. Interacts with MSX3. Interacts with VRK1. Requires Zn(2+) as cofactor. Sumoylated on Lys-444 and Lys-476; which promotes enzymatic activity. Desumoylated by SENP1. In terms of processing, phosphorylation on Ser-421 and Ser-423 promotes enzymatic activity and interactions with NuRD and SIN3 complexes. Phosphorylated by CDK5. Post-translationally, ubiquitinated by CHFR and KCTD11, leading to its degradation by the proteasome.

The protein localises to the nucleus. The catalysed reaction is N(6)-acetyl-L-lysyl-[histone] + H2O = L-lysyl-[histone] + acetate. It carries out the reaction N(6)-acetyl-L-lysyl-[protein] + H2O = L-lysyl-[protein] + acetate. The enzyme catalyses N(6)-(2E)-butenoyl-L-lysyl-[protein] + H2O = (2E)-2-butenoate + L-lysyl-[protein]. It catalyses the reaction N(6)-[(S)-lactoyl]-L-lysyl-[protein] + H2O = (S)-lactate + L-lysyl-[protein]. Inositol tetraphosphate (1D-myo-inositol 1,4,5,6-tetrakisphosphate) may act as an intermolecular glue between HDAC1 and N-Cor repressor complex components. Its function is as follows. Histone deacetylase that catalyzes the deacetylation of lysine residues on the N-terminal part of the core histones (H2A, H2B, H3 and H4). Histone deacetylation gives a tag for epigenetic repression and plays an important role in transcriptional regulation, cell cycle progression and developmental events. Histone deacetylases act via the formation of large multiprotein complexes. Acts as a component of the histone deacetylase NuRD complex which participates in the remodeling of chromatin. As part of the SIN3B complex is recruited downstream of the constitutively active genes transcriptional start sites through interaction with histones and mitigates histone acetylation and RNA polymerase II progression within transcribed regions contributing to the regulation of transcription. Also functions as a deacetylase for non-histone targets, such as NR1D2, RELA, SP1, SP3, STAT3 and TSHZ3. Deacetylates SP proteins, SP1 and SP3, and regulates their function. Component of the BRG1-RB1-HDAC1 complex, which negatively regulates the CREST-mediated transcription in resting neurons. Upon calcium stimulation, HDAC1 is released from the complex and CREBBP is recruited, which facilitates transcriptional activation. Deacetylates TSHZ3 and regulates its transcriptional repressor activity. Deacetylates 'Lys-310' in RELA and thereby inhibits the transcriptional activity of NF-kappa-B. Deacetylates NR1D2 and abrogates the effect of KAT5-mediated relieving of NR1D2 transcription repression activity. Component of a RCOR/GFI/KDM1A/HDAC complex that suppresses, via histone deacetylase (HDAC) recruitment, a number of genes implicated in multilineage blood cell development. Involved in CIART-mediated transcriptional repression of the circadian transcriptional activator: CLOCK-BMAL1 heterodimer. Required for the transcriptional repression of circadian target genes, such as PER1, mediated by the large PER complex or CRY1 through histone deacetylation. In addition to protein deacetylase activity, also has protein-lysine deacylase activity: acts as a protein decrotonylase and delactylase by mediating decrotonylation ((2E)-butenoyl) and delactylation (lactoyl) of histones, respectively. In Bos taurus (Bovine), this protein is Histone deacetylase 1 (HDAC1).